Reading from the N-terminus, the 480-residue chain is 3-isopropylmalate dehydratase large subunit (480 aa).

[4Fe-4S] cluster-binding residues include C361, C421, and C424.

The protein belongs to the aconitase/IPM isomerase family. LeuC type 1 subfamily. Heterodimer of LeuC and LeuD. The cofactor is [4Fe-4S] cluster.

It catalyses the reaction (2R,3S)-3-isopropylmalate = (2S)-2-isopropylmalate. The protein operates within amino-acid biosynthesis; L-leucine biosynthesis; L-leucine from 3-methyl-2-oxobutanoate: step 2/4. Catalyzes the isomerization between 2-isopropylmalate and 3-isopropylmalate, via the formation of 2-isopropylmaleate. The polypeptide is 3-isopropylmalate dehydratase large subunit (Corynebacterium diphtheriae (strain ATCC 700971 / NCTC 13129 / Biotype gravis)).